A 703-amino-acid chain; its full sequence is MSVDERGLAADERGLAADEVGLAADERGRAAELARELEEHAYRYYVLDKPTVADAEYDALMRELEAIEERHPELRTPDSPTQKVAGSYSTLFTPVEHLERLLSLDNVFTDEEFHAWAARAAREQPVTAWLCELKIDGLAVDLVYEGGRLVRAATRGDGRTGEDITPNVRTLASVPSRLRGPAVPELLEVRGEVFFPTERFTELNAALVEAGKAPFANPRNAAAGSLRQKDPRVTASRPLDMIVHGLGAHQGFDVASQSGAYARLAELGLPVSARHEVLASVEDVLAFVRRWGEHRHDVEHEIDGVVVKVDDFGQQRRLGATSKAPRWAVAFKYPPEEVTTRLRDIQVNVGRTGRVTPFGVLEPVKVAGSTVAMATLHNIDEVGRKGVLIGDTVVLRKAGDVIPEIVSPVVDLRDGSERAFVMPTHCPECGTQLVRPEGEVDIRCPNTVSCPAQLRESVFHLASRGALDIDGLGYETATVLLAEGRIHDIGDVFHLAPESFEGLRGFADKKIEQILRGLEAARDRPLWRLLVGLSIRHVGPTAARGLARELRSLDAIATAPAERLAAVDGVGPKIADAVVDWFADPRHRDIVARIASGGVRLADEGAGEGPGPLDGVVVVITGTLDGWSRDTATEAVQSRGGKVTGSVSKKTTFVVAGADPGASKYDKARTLKIPLLDEAGFAVLLRDGADAARALAVPEEVDG.

Residues 54–58, 103–104, and Glu-132 contribute to the NAD(+) site; these read DAEYD and SL. Lys-134 (N6-AMP-lysine intermediate) is an active-site residue. NAD(+)-binding residues include Arg-155, Glu-192, Lys-308, and Lys-332. Zn(2+) contacts are provided by Cys-426, Cys-429, Cys-444, and Cys-450. Positions 608–698 constitute a BRCT domain; the sequence is EGPGPLDGVV…ADAARALAVP (91 aa).

Belongs to the NAD-dependent DNA ligase family. LigA subfamily. The cofactor is Mg(2+). Mn(2+) serves as cofactor.

It catalyses the reaction NAD(+) + (deoxyribonucleotide)n-3'-hydroxyl + 5'-phospho-(deoxyribonucleotide)m = (deoxyribonucleotide)n+m + AMP + beta-nicotinamide D-nucleotide.. Its function is as follows. DNA ligase that catalyzes the formation of phosphodiester linkages between 5'-phosphoryl and 3'-hydroxyl groups in double-stranded DNA using NAD as a coenzyme and as the energy source for the reaction. It is essential for DNA replication and repair of damaged DNA. The sequence is that of DNA ligase from Parafrankia sp. (strain EAN1pec).